The sequence spans 1620 residues: DNA (cytosine-5)-methyltransferase 1 (1620 aa).

A disordered region spans residues 1–21 (MPARTAPARVPALASPAGSLP). The interaction with DMAP1 stretch occupies residues 1–120 (MPARTAPARV…SRPTWRAEMA (120 aa)). The segment at 1 to 145 (MPARTAPARV…RRSKSDSDTL (145 aa)) is interaction with DNMT3A. Interaction with the PRC2/EED-EZH2 complex regions lie at residues 1–343 (MPAR…SERK) and 305–609 (APET…RVMG). Ser-15 carries the phosphoserine modification. The 94-residue stretch at 16–109 (PAGSLPDHVR…TQKANGCPAN (94 aa)) folds into the DMAP1-binding domain. Lys-70 carries the N6,N6-dimethyllysine; by EHMT2 modification. The disordered stretch occupies residues 96–369 (THTLTQKANG…PECGQHLDDP (274 aa)). Basic residues predominate over residues 126–137 (PRSRPKPRGPRR). Phosphoserine is present on Ser-138. Lys-139 is modified (N6-methyllysine; by SETD7). A Phosphoserine modification is found at Ser-140. Polar residues predominate over residues 144–155 (TLSVETSPSSVA). A Phosphoserine; by CK1 modification is found at Ser-146. The segment at 147 to 217 (VETSPSSVAT…SGAAAAVEKL (71 aa)) is interaction with DNMT3B. Phosphoserine is present on residues Ser-150 and Ser-152. Residues 161–172 (RQTTITAHFTKG) form an interaction with PCNA region. Thr-164 carries the phosphothreonine modification. Position 171 is an N6-acetyllysine (Lys-171). A Nuclear localization signal motif is present at residues 175-202 (KRKPKEESEEGNSAESAAEERDQDKKRR). Basic and acidic residues predominate over residues 192–205 (AEERDQDKKRRVVD). Position 240 is a phosphoserine (Ser-240). 2 stretches are compositionally biased toward basic and acidic residues: residues 246-267 (RELS…PETH) and 286-300 (QPRD…KEAE). Lys-255 carries the post-translational modification N6-acetyllysine; alternate. A Glycyl lysine isopeptide (Lys-Gly) (interchain with G-Cter in SUMO2); alternate cross-link involves residue Lys-255. Positions 308–317 (TPEDRDEDER) are enriched in acidic residues. The interval 328-556 (KLESHTVPVQ…NVNRFTEDSL (229 aa)) is DNA replication foci-targeting sequence. Cys-359 and Cys-362 together coordinate Zn(2+). The residue at position 372 (Lys-372) is an N6-acetyllysine. Zn(2+) is bound by residues Cys-420 and His-424. 2 positions are modified to phosphoserine: Ser-515 and Ser-555. The CXXC-type zinc-finger motif lies at 649 to 695 (NAMKRRRCGVCEVCQQPECGKCKACKDMVKFGGTGRSKQACLKRRCP). Zn(2+) contacts are provided by Cys-656, Cys-659, Cys-662, Cys-667, Cys-670, Cys-673, Cys-689, and Cys-694. The interval 696–757 (NLAVKEADDD…TYYQKVSIDE (62 aa)) is autoinhibitory linker. The interaction with HDAC1 stretch occupies residues 696-813 (NLAVKEADDD…TDTVLGATSD (118 aa)). Residues 702-713 (ADDDEEADDDVS) are compositionally biased toward acidic residues. Residues 702 to 732 (ADDDEEADDDVSEMPSPKKLHQGKKKKQNKD) form a disordered region. Phosphoserine occurs at positions 713 and 717. Over residues 719-730 (KKLHQGKKKKQN) the composition is skewed to basic residues. Ser-735 carries the phosphoserine modification. Lys-752 carries the N6-acetyllysine modification. The BAH 1 domain occupies 758 to 884 (EMLEVGDCVS…QEYARFESPP (127 aa)). Position 882 is a phosphoserine (Ser-882). Residues Lys-895, Lys-961, Lys-965, and Lys-979 each carry the N6-acetyllysine modification. One can recognise a BAH 2 domain in the interval 976–1103 (HYRKYSDYIK…SKTKNFEDPP (128 aa)). The tract at residues 1097–1136 (KNFEDPPNHARSPGNKGKGKGKGKGKGKHQVSEPKEPEAA) is disordered. A run of 6 repeats spans residues 1112–1113 (KG), 1114–1115 (KG), 1116–1117 (KG), 1118–1119 (KG), 1120–1121 (KG), and 1122–1123 (KG). The interval 1112–1125 (KGKGKGKGKGKGKH) is 7 X 2 AA tandem repeats of K-G. The segment covering 1113-1125 (GKGKGKGKGKGKH) has biased composition (basic residues). 6 positions are modified to N6-acetyllysine: Lys-1114, Lys-1116, Lys-1118, Lys-1120, Lys-1122, and Lys-1124. One copy of the 7; approximate repeat lies at 1124 to 1125 (KH). The segment at 1124–1620 (KHQVSEPKEP…KAKEEAATKD (497 aa)) is interaction with the PRC2/EED-EZH2 complex. The segment covering 1126 to 1135 (QVSEPKEPEA) has biased composition (basic and acidic residues). The 460-residue stretch at 1142 to 1601 (LRTLDVFSGC…LEIKLCLLSS (460 aa)) folds into the SAM-dependent MTase C5-type domain. Residues 1142–1620 (LRTLDVFSGC…KAKEEAATKD (479 aa)) form a catalytic region. S-adenosyl-L-methionine-binding positions include Ser-1149, 1153-1154 (GL), 1171-1172 (EM), and 1193-1194 (DC). Cys-1229 is a catalytic residue. An N6-acetyllysine mark is found at Lys-1352 and Lys-1418. Val-1582 serves as a coordination point for S-adenosyl-L-methionine. Residue Lys-1611 forms a Glycyl lysine isopeptide (Lys-Gly) (interchain with G-Cter in SUMO2) linkage.

It belongs to the class I-like SAM-binding methyltransferase superfamily. C5-methyltransferase family. In terms of assembly, homodimer. Forms a stable complex with E2F1, BB1 and HDAC1. Forms a complex with DMAP1 and HDAC2, with direct interaction. Interacts with the PRC2/EED-EZH2 complex. Probably part of a corepressor complex containing ZNF304, TRIM28, SETDB1 and DNMT1. Interacts with UHRF1; promoting its recruitment to hemimethylated DNA. Interacts with USP7, promoting its deubiquitination. Interacts with BAZ2A/TIP5. Interacts with PCNA. Interacts with MBD2 and MBD3. Interacts with DNMT3A and DNMT3B. Interacts with UBC9. Interacts with HDAC1. Interacts with CSNK1D. Interacts with SIRT7. Interacts with ZNF263; recruited to the SIX3 promoter along with other proteins involved in chromatin modification and transcriptional corepression where it contributes to transcriptional repression. Interacts with L3MBTL3 and DCAF5; the interaction requires DNMT1 methylation at Lys-139 and is necessary to target DNMT1 for ubiquitination by the CRL4-DCAF5 E3 ubiquitin ligase complex and proteasomal degradation. Interacts with PHF20L1; the interaction requires DNMT1 methylation at Lys-139 and protects DNMT1 from ubiquitination and proteasomal degradation. In terms of processing, sumoylated; sumoylation increases activity. Phosphorylation at Ser-146 by CK1 reduces DNA-binding activity. Post-translationally, acetylation on multiple lysines, mainly by KAT2B/PCAF, regulates cell cycle G(2)/M transition. Deacetylation of Lys-1352 and Lys-1418 by SIRT1 increases methyltransferase activity. In terms of processing, phosphorylation of Ser-152 by CDKs is important for enzymatic activity and protein stability. Phosphorylation of Ser-140 by AKT1 prevents methylation by SETD7 thereby increasing DNMT1 stability. Methylation at Lys-139 by SETD7 is necessary for the regulation of DNMT1 proteasomal degradation. Post-translationally, ubiquitinated by UHRF1; interaction with USP7 counteracts ubiquitination by UHRF1 by promoting deubiquitination and preventing degradation by the proteasome. As to expression, isoform 1 is expressed in embryonic stem cells and in somatic tissues. Isoform 2 is expressed in oocytes, preimplantation embryos, testis and in skeletal muscle during myogenesis.

It localises to the nucleus. It is found in the cytoplasm. It catalyses the reaction a 2'-deoxycytidine in DNA + S-adenosyl-L-methionine = a 5-methyl-2'-deoxycytidine in DNA + S-adenosyl-L-homocysteine + H(+). Allosterically regulated. The binding of 5-methylcytosine-containing DNA to the N-terminal parts of DNMT1 causes an allosteric activation of the catalytic domain by a direct interaction of its Zn-binding domain with the catalytic domain. In terms of biological role, methylates CpG residues. Preferentially methylates hemimethylated DNA. Associates with DNA replication sites in S phase maintaining the methylation pattern in the newly synthesized strand, that is essential for epigenetic inheritance. Associates with chromatin during G2 and M phases to maintain DNA methylation independently of replication. It is responsible for maintaining methylation patterns established in development. DNA methylation is coordinated with methylation of histones. Mediates transcriptional repression by direct binding to HDAC2. In association with DNMT3B and via the recruitment of CTCFL/BORIS, involved in activation of BAG1 gene expression by modulating dimethylation of promoter histone H3 at H3K4 and H3K9. Probably forms a corepressor complex required for activated KRAS-mediated promoter hypermethylation and transcriptional silencing of tumor suppressor genes (TSGs) or other tumor-related genes in colorectal cancer (CRC) cells. Also required to maintain a transcriptionally repressive state of genes in undifferentiated embryonic stem cells (ESCs). Associates at promoter regions of tumor suppressor genes (TSGs) leading to their gene silencing. Promotes tumor growth. The chain is DNA (cytosine-5)-methyltransferase 1 (Dnmt1) from Mus musculus (Mouse).